The following is a 276-amino-acid chain: NADPH-dependent 7-cyano-7-deazaguanine reductase (276 aa).

Residue I83–S85 participates in substrate binding. S85–K86 is a binding site for NADPH. C184 acts as the Thioimide intermediate in catalysis. D191 (proton donor) is an active-site residue. Position 223-224 (H223–E224) interacts with substrate. Position 252 to 253 (R252 to G253) interacts with NADPH.

It belongs to the GTP cyclohydrolase I family. QueF type 2 subfamily. As to quaternary structure, homodimer.

The protein resides in the cytoplasm. It catalyses the reaction 7-aminomethyl-7-carbaguanine + 2 NADP(+) = 7-cyano-7-deazaguanine + 2 NADPH + 3 H(+). The protein operates within tRNA modification; tRNA-queuosine biosynthesis. In terms of biological role, catalyzes the NADPH-dependent reduction of 7-cyano-7-deazaguanine (preQ0) to 7-aminomethyl-7-deazaguanine (preQ1). The protein is NADPH-dependent 7-cyano-7-deazaguanine reductase of Pseudomonas aeruginosa (strain LESB58).